A 302-amino-acid polypeptide reads, in one-letter code: Aspartate carbamoyltransferase catalytic subunit (302 aa).

R49 and T50 together coordinate carbamoyl phosphate. K77 lines the L-aspartate pocket. Positions 99, 126, and 129 each coordinate carbamoyl phosphate. 2 residues coordinate L-aspartate: R159 and R209. Positions 250 and 251 each coordinate carbamoyl phosphate.

Belongs to the aspartate/ornithine carbamoyltransferase superfamily. ATCase family. In terms of assembly, heterododecamer (2C3:3R2) of six catalytic PyrB chains organized as two trimers (C3), and six regulatory PyrI chains organized as three dimers (R2).

The catalysed reaction is carbamoyl phosphate + L-aspartate = N-carbamoyl-L-aspartate + phosphate + H(+). It functions in the pathway pyrimidine metabolism; UMP biosynthesis via de novo pathway; (S)-dihydroorotate from bicarbonate: step 2/3. Functionally, catalyzes the condensation of carbamoyl phosphate and aspartate to form carbamoyl aspartate and inorganic phosphate, the committed step in the de novo pyrimidine nucleotide biosynthesis pathway. The polypeptide is Aspartate carbamoyltransferase catalytic subunit (Staphylococcus carnosus (strain TM300)).